A 237-amino-acid chain; its full sequence is uncharacterized protein (237 aa).

The segment at residues 1–25 (MRHIFQRLLPRRLWLAGLPCLALLG) is a signal peptide (tat-type signal). The disordered stretch occupies residues 201–237 (IERQLSTRKPAGNFSPDTPHESEKPAPSTHEVTPDEP).

Exported by the Tat system. The position of the signal peptide cleavage has not been experimentally proven. Can also be exported by the Sec system.

This is an uncharacterized protein from Escherichia coli (strain K12).